A 318-amino-acid polypeptide reads, in one-letter code: Polyprenal reductase (318 aa).

Residues 1 to 19 (MAPWAAAQLWALNPLRALW) are Cytoplasmic-facing. Residues 20 to 40 (LTLAAAFLLTLLLQLVPPGLL) form a helical membrane-spanning segment. The Lumenal segment spans residues 41 to 80 (PGCALFQDLIRYGKTKREGQSRPAVCRVFDVPKRYFSHFY). A helical transmembrane segment spans residues 81-101 (IISALWNGFLLWHLTQSVFLG). Residues 102-119 (VPFPNWLHGLLRILGASQ) are Cytoplasmic-facing. The chain crosses the membrane as a helical span at residues 120-140 (FQGGELALSAFLVLVFLWLHS). At 141-156 (LRRLFECFYVSVFSNT) the chain is on the lumenal side. Residues 157 to 177 (VIHIVQYCFGLVYYVLTGLTV) form a helical membrane-spanning segment. The Cytoplasmic portion of the chain corresponds to 178-194 (LSQVPMDGRNAYVIGKN). Residues 195–215 (LLMQARWFHILGMLMFIWSSV) traverse the membrane as a helical segment. Topologically, residues 216-265 (HQYKCHVILGNLRKNKAGVVIHCNHRIPFGDWFEYVSSPNYLAELMIYIS) are lumenal. A helical membrane pass occupies residues 266–286 (MAVTFGFHNLTWWLVVTYVFF). The Cytoplasmic portion of the chain corresponds to 287 to 318 (SQALSAFLSHKFYKSKFVSYPKHRKAFLPFLF).

It belongs to the steroid 5-alpha reductase family. Polyprenal reductase subfamily.

The protein localises to the endoplasmic reticulum membrane. The catalysed reaction is a di-trans,poly-cis-dolichal + NADP(+) = a di-trans,poly-cis-polyprenal + NADPH + H(+). The enzyme catalyses a 3-oxo-5alpha-steroid + NADP(+) = a 3-oxo-Delta(4)-steroid + NADPH + H(+). It catalyses the reaction androst-4-ene-3,17-dione + NADPH + H(+) = 5alpha-androstan-3,17-dione + NADP(+). It carries out the reaction 17beta-hydroxy-5alpha-androstan-3-one + NADP(+) = testosterone + NADPH + H(+). It participates in protein modification; protein glycosylation. Plays a key role in early steps of protein N-linked glycosylation by being involved in the conversion of polyprenol into dolichol. Acts as a polyprenal reductase that mediates the reduction of polyprenal into dolichal in a NADP-dependent mechanism. Dolichols are required for the synthesis of dolichol-linked monosaccharides and the oligosaccharide precursor used for N-glycosylation. Also able to convert testosterone (T) into 5-alpha-dihydrotestosterone (DHT). The protein is Polyprenal reductase (SRD5A3) of Ailuropoda melanoleuca (Giant panda).